The primary structure comprises 631 residues: BTB/POZ domain-containing protein At1g67900 (631 aa).

The region spanning 28–93 (SDFTIEVSGS…CYGITITISA (66 aa)) is the BTB domain. Residues 200 to 509 (GWWAEDIAEL…VQVLFYEQAR (310 aa)) form the NPH3 domain. The segment at 361–399 (QTSPPTSPLRGKKGMMDRRRRSRSAENIDLEFQESRRSS) is disordered. Positions 370 to 382 (RGKKGMMDRRRRS) are enriched in basic residues. Position 450 is a phosphotyrosine (tyrosine 450). Serine 567 carries the post-translational modification Phosphoserine.

This sequence belongs to the NPH3 family.

Its pathway is protein modification; protein ubiquitination. May act as a substrate-specific adapter of an E3 ubiquitin-protein ligase complex (CUL3-RBX1-BTB) which mediates the ubiquitination and subsequent proteasomal degradation of target proteins. The polypeptide is BTB/POZ domain-containing protein At1g67900 (Arabidopsis thaliana (Mouse-ear cress)).